Reading from the N-terminus, the 264-residue chain is Short chain dehydrogenase/reductase nsrJ (264 aa).

4 residues coordinate NADP(+): I24, D70, N97, and R130. Residues S146 and S147 each act as proton donor in the active site. The NADP(+) site is built by Y161, K165, and T196. Catalysis depends on Y161, which acts as the Proton acceptor. The active-site Lowers pKa of active site Tyr is the K165.

This sequence belongs to the short-chain dehydrogenases/reductases (SDR) family.

It functions in the pathway secondary metabolite biosynthesis. Short chain dehydrogenase/reductase; part of the gene cluster that mediates the biosynthesis of the tetrahydroxanthone dimer neosartorin, which exhibits antibacterial activity. The two different monomeric units appear to be synthesized by the same set of enzymes, among which the Baeyer-Villiger monooxygenase nsrF is the key enzyme for the divergence of the biosynthetic routes. The pathway begins with the synthesis of atrochrysone thioester by the polyketide synthase nsrB. The atrochrysone carboxyl ACP thioesterase nsrC then breaks the thioester bond and releases the atrochrysone carboxylic acid from AacuL. Atrochrysone carboxylic acid is decarboxylated by the decarboxylase nsrE, and oxidized by the anthrone oxygenase nsrD to yield emodin. Emodin is then reduced to emodin hydroquinone by the oxidoreductase nsrR. A-ring reduction by the short chain dehydrogenase nsrJ, dehydration by the scytalone dehydratase-like protein nsrI and probable spontaneous re-oxidation, results in overall deoxygenation to chrysophanol. The Baeyer-Villiger monooxygenase nsrF accepts chrysophanol as a substrate to insert one oxygen atom at two different positions to yield the precursors of both monomric units. NsrF is promiscuous/flexible in interacting with the 2 (non methylated and methylated) aromatic rings of chrysophanol, thus diverging the biosynthetic pathway at this point. After the hydrolysis of the lactones, methylesterification by the methyltransferase nsrG yields respectively moniliphenone and 2,2',6'-trihydroxy-4-methyl-6-methoxya-cyldiphenylmethanone. The next steps are the hydroxylation by the FAD-dependent monooxygenase nsrK, followed by isomerization by the monooxygenase nsrQ. The short chain dehydrogenase/reductase nsrO then catalyzes the C-5 ketoreduction to give the xanthone skeleton of blennolide C and 5-acetylblennolide A. The acetyltransferase nsrL has a strict substrate specificity and uses only blennolide A but not blennolide C to yield 5-acetylblennolide A as the single-acetylated product. In the final step of the biosynthesis, the heterodimerization of the 2 xanthones, blennolide C and 5-acetylblennolide A, is catalyzed by the cytochrome P450 monooxygenase nsrP. NsrP can utilize at least three different xanthones as its substrates to perform the dimerization reaction. In Aspergillus novofumigatus (strain IBT 16806), this protein is Short chain dehydrogenase/reductase nsrJ.